Consider the following 548-residue polypeptide: MHLVRWLICLIQLWVQLGAAGSVTLLDPLLIEIPNGKLRGRDNGHYYSYEAIPYAEPPTGELRFEVPKPYKQQWTNTFDATQPPVLCMQWNQFINGTNKLLGVEDCLTVSVYRPKNSSRNNFPVVANLHGGAFMFGGPSQYGHENIMREGSVILVTIGYRLGPLGFVSTGDADLSGNFGLKDQRLALLWIKQNIASFGGEPENILVVGHSAGGASVHLQMLREDFSKLAKAAISFSGNALDPWVIQQGLRGRAFELGRIVGCGQASDSGTLKKCLKSKPAIEIVSAVRSFLVFSYVPFTPFGPAIESPDAPEAFITQHPIDIIKSGKFSQVPWAVTYTTEDGGYNAALLLEKQASSGRELIVDLNDRWFDWAPYLLFYRDSMTTIKDMDDYSRKLRQEYLGDRRFSVESYWDVQRMFTDLLFKNSVTVSVDLHRKYGKSPVYAFVYDNPSEVGVGQILSGRNDVYFGTVHGDDVFLIFNVSFVPANRRPDEEIISRNFIKMLEYFALSTDDTMAYGDCVFQNNVGSKHMQLLSITRDGCENKQLNCFI.

The first 21 residues, 1-21, serve as a signal peptide directing secretion; the sequence is MHLVRWLICLIQLWVQLGAAG. Cys-87 and Cys-106 are joined by a disulfide. 2 N-linked (GlcNAc...) asparagine glycosylation sites follow: Asn-95 and Asn-116. Ser-210 acts as the Acyl-ester intermediate in catalysis. Cys-262 and Cys-274 are oxidised to a cystine. N-linked (GlcNAc...) asparagine glycosylation is present at Asn-479. Cysteines 518 and 539 form a disulfide.

This sequence belongs to the type-B carboxylesterase/lipase family.

The protein resides in the secreted. It carries out the reaction a carboxylic ester + H2O = an alcohol + a carboxylate + H(+). This Drosophila pseudoobscura pseudoobscura (Fruit fly) protein is Esterase-5A (Est-5A).